A 499-amino-acid polypeptide reads, in one-letter code: Glutelin type-A 2 (499 aa).

Positions 1–24 (MASINRPIVFFTVCLFLLCDGSLA) are cleaved as a signal peptide. 2 cysteine pairs are disulfide-bonded: cysteine 46–cysteine 79 and cysteine 122–cysteine 313. The Cupin type-1 1 domain maps to 51-248 (LQAFEPIRSV…AFGISNQVAR (198 aa)). Positions 280 to 300 (EQGQMQSREHYQEGGYQQSQY) are disordered. The Cupin type-1 2 domain occupies 319 to 468 (QNIDNPNRAD…AYRISREEAQ (150 aa)).

The protein belongs to the 11S seed storage protein (globulins) family. Hexamer; each subunit is composed of an acidic and a basic chain derived from a single precursor and linked by a disulfide bond.

Its function is as follows. Seed storage protein. In Oryza sativa subsp. japonica (Rice), this protein is Glutelin type-A 2 (GLUA2).